We begin with the raw amino-acid sequence, 96 residues long: Small ribosomal subunit protein bS6c (96 aa).

Belongs to the bacterial ribosomal protein bS6 family.

It is found in the plastid. The protein resides in the chloroplast. Functionally, binds together with bS18 to 16S ribosomal RNA. The chain is Small ribosomal subunit protein bS6c (rps6) from Trieres chinensis (Marine centric diatom).